The chain runs to 283 residues: Glutamate racemase (283 aa).

Residues 28-29 (DS) and 60-61 (YG) each bind substrate. Catalysis depends on Cys92, which acts as the Proton donor/acceptor. A substrate-binding site is contributed by 93 to 94 (NT). Catalysis depends on Cys204, which acts as the Proton donor/acceptor. 205-206 (TH) contributes to the substrate binding site.

It belongs to the aspartate/glutamate racemases family.

It carries out the reaction L-glutamate = D-glutamate. The protein operates within cell wall biogenesis; peptidoglycan biosynthesis. Functionally, provides the (R)-glutamate required for cell wall biosynthesis. In Klebsiella pneumoniae (strain 342), this protein is Glutamate racemase.